The sequence spans 80 residues: Large ribosomal subunit protein bL31B (80 aa).

Belongs to the bacterial ribosomal protein bL31 family. Type B subfamily. Part of the 50S ribosomal subunit.

The protein is Large ribosomal subunit protein bL31B of Oenococcus oeni (strain ATCC BAA-331 / PSU-1).